Consider the following 195-residue polypeptide: GTP cyclohydrolase 1 (195 aa).

Zn(2+)-binding residues include cysteine 85, histidine 88, and cysteine 157.

It belongs to the GTP cyclohydrolase I family. As to quaternary structure, toroid-shaped homodecamer, composed of two pentamers of five dimers.

The catalysed reaction is GTP + H2O = 7,8-dihydroneopterin 3'-triphosphate + formate + H(+). It functions in the pathway cofactor biosynthesis; 7,8-dihydroneopterin triphosphate biosynthesis; 7,8-dihydroneopterin triphosphate from GTP: step 1/1. This Clostridium acetobutylicum (strain ATCC 824 / DSM 792 / JCM 1419 / IAM 19013 / LMG 5710 / NBRC 13948 / NRRL B-527 / VKM B-1787 / 2291 / W) protein is GTP cyclohydrolase 1.